The chain runs to 3051 residues: Biorientation of chromosomes in cell division protein 1-like 1 (3051 aa).

The span at 1 to 33 (MATNPQPQPPPPAPPPPPPQPQPQPPPPPPGPG) shows a compositional bias: pro residues. Disordered stretches follow at residues 1–47 (MATN…AGAG), 164–197 (HKEE…SANV), 215–288 (ASAA…CPVE), 301–393 (ILLN…KEDF), and 411–469 (VHTS…VRHA). Gly residues predominate over residues 34 to 47 (AGPGAGGAGGAGAG). Low complexity predominate over residues 215 to 227 (ASAARASTETSNA). The segment covering 246–263 (STDKERTSEDMADKEKST) has biased composition (basic and acidic residues). At serine 266 the chain carries Phosphoserine. The span at 312-393 (SEQKNKSTDK…KTVEGTKEDF (82 aa)) shows a compositional bias: basic and acidic residues. A compositionally biased stretch (acidic residues) spans 418–443 (SFEEDTEEEVVTSDSMEEGEITSDDE). An N6-acetyllysine modification is found at lysine 473. A phosphoserine mark is found at serine 482 and serine 484. 3 stretches are compositionally biased toward basic and acidic residues: residues 497–527 (IAKE…EKTK), 549–570 (LEPK…EKKV), and 580–653 (SRNV…LERE). The interval 497 to 1203 (IAKEKEERLL…EKHADHRSTL (707 aa)) is disordered. A phosphoserine mark is found at serine 635 and serine 659. Phosphothreonine occurs at positions 660 and 733. 6 stretches are compositionally biased toward basic and acidic residues: residues 671-772 (TDTR…EENI), 804-852 (KDGK…KIQK), 866-878 (RRSE…KCDM), 940-966 (KPDK…KPFE), 984-1021 (TQKD…DGHK), and 1028-1075 (SSKD…ENRR). A Phosphoserine modification is found at serine 1077. Composition is skewed to polar residues over residues 1092-1103 (NTLSTPSGSSLQ) and 1135-1148 (SKTQ…SQQD). Serine 1145 and serine 1318 each carry phosphoserine. Threonine 1354 is subject to Phosphothreonine. Disordered regions lie at residues 1456-1550 (KLKH…QSEV), 1700-1725 (GSIS…ETEG), and 1760-1890 (VVLG…TGLG). Residues 1465-1479 (KVKDISIDVERRNEN) are compositionally biased toward basic and acidic residues. Residues 1482–1504 (VDTSAGSGSAPSVLHQRNGQTED) show a composition bias toward polar residues. Serine 1531, serine 1701, and serine 1710 each carry phosphoserine. Phosphoserine occurs at positions 2013, 2025, 2128, and 2203. Disordered regions lie at residues 2189–2210 (DFEG…STSK), 2258–2285 (TSSV…TPAE), 2403–2447 (STEE…FAGR), 2472–2519 (EDKS…AKDP), 2615–2635 (DQAS…FPEE), and 2717–3051 (VENS…KAKR). The segment covering 2191–2207 (EGPMPSAPPEAESPLAS) has biased composition (low complexity). The segment covering 2428–2439 (AEKEEKHGKECP) has biased composition (basic and acidic residues). A Phosphoserine modification is found at serine 2475. Positions 2483 to 2492 (GSSTASYSAG) are enriched in low complexity. Phosphoserine occurs at positions 2501 and 2618. Composition is skewed to basic and acidic residues over residues 2621–2633 (KTGD…KSFP), 2724–2746 (TNEE…KDNA), and 2754–2767 (VEAD…EERH). A compositionally biased stretch (acidic residues) spans 2780–2789 (SEDEPDDNPD). Over residues 2791-2822 (LDSRIETAQRQCPETEPHDTKEENSRDLEELP) the composition is skewed to basic and acidic residues. Polar residues predominate over residues 2823–2834 (KTSSETNSTTSR). Basic and acidic residues predominate over residues 2848 to 2864 (TGEKPEQNDDDTIKSQE). The span at 2871–2880 (IKRKRGRPRK) shows a compositional bias: basic residues. Positions 2872-2884 (KRKRGRPRKYPVE) form a DNA-binding region, a.T hook. Residues 2896-2910 (DTGIVTVEQSPSSSK) show a composition bias toward polar residues. Residues serine 2905 and serine 2907 each carry the phosphoserine modification. The span at 2944–2953 (VRRRGRKPKR) shows a compositional bias: basic residues. Serine 2954 is modified (phosphoserine). Residue threonine 2956 is modified to Phosphothreonine. A phosphoserine mark is found at serine 2958, serine 2964, and serine 2973. Glycyl lysine isopeptide (Lys-Gly) (interchain with G-Cter in ubiquitin) cross-links involve residues lysine 2981 and lysine 2982. Over residues 2985 to 2998 (ESDEEEEEEEEDEP) the composition is skewed to acidic residues. Serine 2986 and serine 3019 each carry phosphoserine. The segment covering 3000 to 3020 (GATTRSTTRSEAQRSKTQLSP) has biased composition (polar residues). Positions 3039–3051 (QRVEEAPVKKAKR) are enriched in basic and acidic residues.

Belongs to the BOD1 family. Interacts (via COMPASS-Shg1 domain) with SETD1A at stalled replication forks; this interaction mediates FANCD2-dependent nucleosome remodeling at reversed forks protecting them from nucleolytic degradation.

It is found in the chromosome. Component of the fork protection machinery required to protect stalled/damaged replication forks from uncontrolled DNA2-dependent resection. Acts by stabilizing RAD51 at stalled replication forks and protecting RAD51 nucleofilaments from the antirecombinogenic activities of FBH1 and BLM. Does not regulate spindle orientation. The polypeptide is Biorientation of chromosomes in cell division protein 1-like 1 (Homo sapiens (Human)).